The chain runs to 543 residues: CTP synthase (543 aa).

The segment at 1–265 (MTRFVFITGG…DQEVLRYFDL (265 aa)) is amidoligase domain. Ser-13 contributes to the CTP binding site. Residue Ser-13 participates in UTP binding. Residue 14-19 (SLGKGI) coordinates ATP. Tyr-54 lines the L-glutamine pocket. Asp-71 contributes to the ATP binding site. Mg(2+) is bound by residues Asp-71 and Glu-139. Residues 146–148 (DIE), 186–191 (KTKPTQ), and Lys-222 each bind CTP. UTP is bound by residues 186–191 (KTKPTQ) and Lys-222. Residues 291-542 (RVAIVGKYTA…IAAAVKEAHR (252 aa)) enclose the Glutamine amidotransferase type-1 domain. Gly-354 serves as a coordination point for L-glutamine. Cys-381 functions as the Nucleophile; for glutamine hydrolysis in the catalytic mechanism. Residues 382–385 (FGMQ), Glu-405, and Arg-470 contribute to the L-glutamine site. Residues His-515 and Glu-517 contribute to the active site.

It belongs to the CTP synthase family. In terms of assembly, homotetramer.

The enzyme catalyses UTP + L-glutamine + ATP + H2O = CTP + L-glutamate + ADP + phosphate + 2 H(+). It carries out the reaction L-glutamine + H2O = L-glutamate + NH4(+). It catalyses the reaction UTP + NH4(+) + ATP = CTP + ADP + phosphate + 2 H(+). Its pathway is pyrimidine metabolism; CTP biosynthesis via de novo pathway; CTP from UDP: step 2/2. With respect to regulation, allosterically activated by GTP, when glutamine is the substrate; GTP has no effect on the reaction when ammonia is the substrate. The allosteric effector GTP functions by stabilizing the protein conformation that binds the tetrahedral intermediate(s) formed during glutamine hydrolysis. Inhibited by the product CTP, via allosteric rather than competitive inhibition. In terms of biological role, catalyzes the ATP-dependent amination of UTP to CTP with either L-glutamine or ammonia as the source of nitrogen. Regulates intracellular CTP levels through interactions with the four ribonucleotide triphosphates. This chain is CTP synthase, found in Gluconobacter oxydans (strain 621H) (Gluconobacter suboxydans).